A 181-amino-acid chain; its full sequence is ATP-dependent protease subunit HslV (181 aa).

The active site involves Thr9. Na(+)-binding residues include Gly164, Cys167, and Thr170.

Belongs to the peptidase T1B family. HslV subfamily. In terms of assembly, a double ring-shaped homohexamer of HslV is capped on each side by a ring-shaped HslU homohexamer. The assembly of the HslU/HslV complex is dependent on binding of ATP.

The protein resides in the cytoplasm. The catalysed reaction is ATP-dependent cleavage of peptide bonds with broad specificity.. Its activity is regulated as follows. Allosterically activated by HslU binding. Protease subunit of a proteasome-like degradation complex believed to be a general protein degrading machinery. The protein is ATP-dependent protease subunit HslV of Gemmatimonas aurantiaca (strain DSM 14586 / JCM 11422 / NBRC 100505 / T-27).